Consider the following 247-residue polypeptide: Pyridoxine 5'-phosphate synthase (247 aa).

Asparagine 9 is a 3-amino-2-oxopropyl phosphate binding site. 11–12 (DH) is a 1-deoxy-D-xylulose 5-phosphate binding site. Arginine 20 contacts 3-amino-2-oxopropyl phosphate. Residue histidine 45 is the Proton acceptor of the active site. 2 residues coordinate 1-deoxy-D-xylulose 5-phosphate: arginine 47 and histidine 52. The active-site Proton acceptor is the glutamate 72. Residue threonine 102 participates in 1-deoxy-D-xylulose 5-phosphate binding. The active-site Proton donor is the histidine 193. 3-amino-2-oxopropyl phosphate-binding positions include glycine 194 and 215–216 (GH).

The protein belongs to the PNP synthase family. Homooctamer; tetramer of dimers.

It is found in the cytoplasm. It catalyses the reaction 3-amino-2-oxopropyl phosphate + 1-deoxy-D-xylulose 5-phosphate = pyridoxine 5'-phosphate + phosphate + 2 H2O + H(+). Its pathway is cofactor biosynthesis; pyridoxine 5'-phosphate biosynthesis; pyridoxine 5'-phosphate from D-erythrose 4-phosphate: step 5/5. Its function is as follows. Catalyzes the complicated ring closure reaction between the two acyclic compounds 1-deoxy-D-xylulose-5-phosphate (DXP) and 3-amino-2-oxopropyl phosphate (1-amino-acetone-3-phosphate or AAP) to form pyridoxine 5'-phosphate (PNP) and inorganic phosphate. This is Pyridoxine 5'-phosphate synthase from Blochmanniella floridana.